A 257-amino-acid polypeptide reads, in one-letter code: Acetylglutamate kinase (257 aa).

Substrate contacts are provided by residues G43–G44, R65, and N157. Residues D180–L185 and I208–T210 each bind ATP.

This sequence belongs to the acetylglutamate kinase family. ArgB subfamily. Homodimer.

The protein localises to the cytoplasm. The enzyme catalyses N-acetyl-L-glutamate + ATP = N-acetyl-L-glutamyl 5-phosphate + ADP. It participates in amino-acid biosynthesis; L-arginine biosynthesis; N(2)-acetyl-L-ornithine from L-glutamate: step 2/4. In terms of biological role, catalyzes the ATP-dependent phosphorylation of N-acetyl-L-glutamate. The protein is Acetylglutamate kinase of Salmonella paratyphi A (strain AKU_12601).